A 262-amino-acid chain; its full sequence is Spindlin-1 (262 aa).

Positions 1-51 (MKTPFGKTPGQRSRADAGHAGVSANMMKKRTSHKKHRSSVGPSKPVSQPRR) are disordered. Glycyl lysine isopeptide (Lys-Gly) (interchain with G-Cter in SUMO2) cross-links involve residues Lys7 and Lys28. Residues 27–38 (MKKRTSHKKHRS) are compositionally biased toward basic residues. Lys44 is subject to N6-acetyllysine; alternate. Lys44 participates in a covalent cross-link: Glycyl lysine isopeptide (Lys-Gly) (interchain with G-Cter in SUMO2); alternate. Residues 53 to 116 (IVGCRIQHGW…RVSALEVLPD (64 aa)) are tudor-like domain 1. A histone H3K4me3 and H3R8me2a binding region spans residues 93–98 (GFDCVY). 2 positions are modified to phosphoserine; by AURKA: Ser109 and Ser124. A tudor-like domain 2 region spans residues 132–193 (MIGKAVEHMF…DYKEGDLRIM (62 aa)). A region of interest (histone H3K4me3 and H3R8me2a binding) is located at residue Glu142. Ser199 carries the post-translational modification Phosphoserine. Residues 213–262 (LVGKQVEYAKEDGSKRTGMVIHQVEAKPSVYFIKFDDDFHIYVYDLVKTS) are tudor-like domain 3. The segment at 250-252 (DFH) is histone H3K4me3 and H3R8me2a binding.

This sequence belongs to the SPIN/STSY family. In terms of assembly, homodimer; may form higher-order oligomers. Interacts with TCF7L2/TCF4; the interaction is direct. Interacts with HABP4 and SERBP1. Interacts with SPINDOC; SPINDOC stabilizes SPIN1 and enhances its association with bivalent H3K4me3K9me3 mark. Interacts with SPOCD1; promoting recruitment of PIWIL4 and SPOCD1 to transposons. In terms of processing, phosphorylated during oocyte meiotic maturation. Highly expressed in ovarian cancer tissues.

It is found in the nucleus. The protein localises to the nucleolus. Functionally, chromatin reader that specifically recognizes and binds histone H3 both trimethylated at 'Lys-4' and 'Lys-9' (H3K4me3K9me3) and is involved in piRNA-mediated retrotransposon silencing during spermatogenesis. Plays a key role in the initiation of the PIWIL4-piRNA pathway, a pathway that directs transposon DNA methylation and silencing in the male embryonic germ cells, by promoting recruitment of DNA methylation machinery to transposons: binds young, but not old, LINE1 transposons, which are specifically marked with H3K4me3K9me3, and promotes the recruitment of PIWIL4 and SPOCD1 to transposons, leading to piRNA-directed DNA methylation. Also recognizes and binds histone H3 both trimethylated at 'Lys-4' and asymmetrically dimethylated at 'Arg-8' (H3K4me3 and H3R8me2a) and acts as an activator of Wnt signaling pathway downstream of PRMT2. In case of cancer, promotes cell cancer proliferation via activation of the Wnt signaling pathway. Overexpression induces metaphase arrest and chromosomal instability. Localizes to active rDNA loci and promotes the expression of rRNA genes. May play a role in cell-cycle regulation during the transition from gamete to embryo. Involved in oocyte meiotic resumption, a process that takes place before ovulation to resume meiosis of oocytes blocked in prophase I: may act by regulating maternal transcripts to control meiotic resumption. The polypeptide is Spindlin-1 (Homo sapiens (Human)).